The sequence spans 376 residues: Carbamoyl phosphate synthase small chain (376 aa).

The interval 1 to 183 (MSKAVLVLED…PDGPPGVSRF (183 aa)) is CPSase. 3 residues coordinate L-glutamine: serine 46, glycine 232, and glycine 234. Residues 184–376 (TVAALDLGIK…FVELMAGEGR (193 aa)) form the Glutamine amidotransferase type-1 domain. The Nucleophile role is filled by cysteine 260. Phenylalanine 261, glutamine 264, asparagine 302, glycine 304, and phenylalanine 305 together coordinate L-glutamine. Catalysis depends on residues histidine 350 and glutamate 352.

Belongs to the CarA family. As to quaternary structure, composed of two chains; the small (or glutamine) chain promotes the hydrolysis of glutamine to ammonia, which is used by the large (or ammonia) chain to synthesize carbamoyl phosphate. Tetramer of heterodimers (alpha,beta)4.

The enzyme catalyses hydrogencarbonate + L-glutamine + 2 ATP + H2O = carbamoyl phosphate + L-glutamate + 2 ADP + phosphate + 2 H(+). It catalyses the reaction L-glutamine + H2O = L-glutamate + NH4(+). It functions in the pathway amino-acid biosynthesis; L-arginine biosynthesis; carbamoyl phosphate from bicarbonate: step 1/1. Its pathway is pyrimidine metabolism; UMP biosynthesis via de novo pathway; (S)-dihydroorotate from bicarbonate: step 1/3. Its function is as follows. Small subunit of the glutamine-dependent carbamoyl phosphate synthetase (CPSase). CPSase catalyzes the formation of carbamoyl phosphate from the ammonia moiety of glutamine, carbonate, and phosphate donated by ATP, constituting the first step of 2 biosynthetic pathways, one leading to arginine and/or urea and the other to pyrimidine nucleotides. The small subunit (glutamine amidotransferase) binds and cleaves glutamine to supply the large subunit with the substrate ammonia. The protein is Carbamoyl phosphate synthase small chain of Mycobacterium bovis (strain ATCC BAA-935 / AF2122/97).